Consider the following 37-residue polypeptide: M-oxotoxin-Ot2a (37 aa).

As to expression, expressed by the venom gland.

The protein resides in the secreted. Its function is as follows. Disrupts biological membranes, particularly those rich in phosphocholine. Has antimicrobial activity against Gram-negative bacterium E.coli, Gram-positive bacteria B.subtilis and S.aureus, and hemolytic activity against sheep, pig and guinea pig red blood cells. Has insecticidal activity against S.frugiperda ovarian cells by opening non-selective ion channels. Enhances the insecticidal activity of spider venom neurotoxic peptides. This Oxyopes takobius (Lynx spider) protein is M-oxotoxin-Ot2a.